A 231-amino-acid polypeptide reads, in one-letter code: Probable calcium-binding protein CML21 (231 aa).

EF-hand domains follow at residues 54–89, 90–125, 145–180, and 181–216; these read DGLRNCKAIFQEFDEDSNGSIDHTELKNCIRKLEIS, FDEEEINDLFKACDINEDMGITFTEFIVLLCLVYLL, PTFETLVDTFVFLDENKDGYVSREEMVRAIDESGER, and SSGRIAMKRFEEMDWDKNGMVNFKEFLFAFTQWVGI. Positions 67, 69, 71, 73, and 78 each coordinate Ca(2+). 10 residues coordinate Ca(2+): D158, N160, D162, Y164, E169, D194, D196, N198, M200, and E205.

In terms of biological role, potential calcium sensor. In Arabidopsis thaliana (Mouse-ear cress), this protein is Probable calcium-binding protein CML21 (CML21).